We begin with the raw amino-acid sequence, 61 residues long: Small ribosomal subunit protein uS14 (61 aa).

C24, C27, C40, and C43 together coordinate Zn(2+).

Belongs to the universal ribosomal protein uS14 family. Zinc-binding uS14 subfamily. Part of the 30S ribosomal subunit. Contacts proteins S3 and S10. Zn(2+) serves as cofactor.

Its function is as follows. Binds 16S rRNA, required for the assembly of 30S particles and may also be responsible for determining the conformation of the 16S rRNA at the A site. The polypeptide is Small ribosomal subunit protein uS14 (Oleidesulfovibrio alaskensis (strain ATCC BAA-1058 / DSM 17464 / G20) (Desulfovibrio alaskensis)).